A 326-amino-acid polypeptide reads, in one-letter code: Protein FAM50 homolog (326 aa).

A disordered region spans residues 77–111; it reads ISNRDLQVARGDQSSSTQSKDSQEAREKEEHVAKH. The span at 97–109 shows a compositional bias: basic and acidic residues; sequence DSQEAREKEEHVA.

Belongs to the FAM50 family.

The protein is Protein FAM50 homolog of Caenorhabditis elegans.